Reading from the N-terminus, the 566-residue chain is Membrane protein insertase YidC (566 aa).

5 consecutive transmembrane segments (helical) span residues 3-23 (IKRIILYVIVALLAIALFNAW), 346-366 (GWLWPISMLLFWILSAVHAVV), 369-389 (WGWSIIITTILIKIVFYWFSA), 436-456 (GGCLPMLIQVPVFIAFYYVII), and 509-529 (MWILPVIFTVFFINFPAGLVL).

It belongs to the OXA1/ALB3/YidC family. Type 1 subfamily. In terms of assembly, interacts with the Sec translocase complex via SecD. Specifically interacts with transmembrane segments of nascent integral membrane proteins during membrane integration.

The protein resides in the cell inner membrane. Its function is as follows. Required for the insertion and/or proper folding and/or complex formation of integral membrane proteins into the membrane. Involved in integration of membrane proteins that insert both dependently and independently of the Sec translocase complex, as well as at least some lipoproteins. Aids folding of multispanning membrane proteins. The chain is Membrane protein insertase YidC from Coxiella burnetii (strain RSA 331 / Henzerling II).